The chain runs to 185 residues: Elongation factor P (185 aa).

Belongs to the elongation factor P family.

It localises to the cytoplasm. The protein operates within protein biosynthesis; polypeptide chain elongation. Its function is as follows. Involved in peptide bond synthesis. Stimulates efficient translation and peptide-bond synthesis on native or reconstituted 70S ribosomes in vitro. Probably functions indirectly by altering the affinity of the ribosome for aminoacyl-tRNA, thus increasing their reactivity as acceptors for peptidyl transferase. The polypeptide is Elongation factor P (Finegoldia magna (strain ATCC 29328 / DSM 20472 / WAL 2508) (Peptostreptococcus magnus)).